The primary structure comprises 263 residues: GTP cyclohydrolase 1 type 2 homolog (263 aa).

Positions 76, 77, 113, 231, and 235 each coordinate a divalent metal cation.

It belongs to the GTP cyclohydrolase I type 2/NIF3 family. As to quaternary structure, homohexamer.

The protein is GTP cyclohydrolase 1 type 2 homolog of Deinococcus radiodurans (strain ATCC 13939 / DSM 20539 / JCM 16871 / CCUG 27074 / LMG 4051 / NBRC 15346 / NCIMB 9279 / VKM B-1422 / R1).